We begin with the raw amino-acid sequence, 313 residues long: Porphobilinogen deaminase (313 aa).

C240 carries the post-translational modification S-(dipyrrolylmethanemethyl)cysteine.

Belongs to the HMBS family. In terms of assembly, monomer. The cofactor is dipyrromethane.

The enzyme catalyses 4 porphobilinogen + H2O = hydroxymethylbilane + 4 NH4(+). It participates in porphyrin-containing compound metabolism; protoporphyrin-IX biosynthesis; coproporphyrinogen-III from 5-aminolevulinate: step 2/4. Functionally, tetrapolymerization of the monopyrrole PBG into the hydroxymethylbilane pre-uroporphyrinogen in several discrete steps. The protein is Porphobilinogen deaminase of Moorella thermoacetica (strain ATCC 39073 / JCM 9320).